The chain runs to 520 residues: Aspartate-proton symporter (520 aa).

14 helical membrane passes run 13–33 (LFDL…LFAV), 49–69 (ILGG…GAAL), 85–105 (HLVG…LISI), 130–150 (TISG…LNYW), 161–181 (IISI…IFHF), 201–221 (AAIS…IVSV), 232–252 (IPIA…VLQV), 281–301 (IAVM…AILS), 345–365 (WLSF…NALV), 366–386 (NVCS…SAAL), 402–422 (MSII…WSGW), 425–445 (VSWL…FSKY), 460–480 (AWWL…GSFG), and 482–502 (GLGI…SLAI).

It belongs to the amino acid-polyamine-organocation (APC) superfamily. AGT (TC 2.A.3.11) family.

The protein resides in the cell membrane. Functionally, uptake of L-aspartate with the concomitant import of a proton. Can also transport aspartate hydroxamate and L-glutamate with lower affinity and efficiency. The chain is Aspartate-proton symporter (yveA) from Bacillus subtilis (strain 168).